Consider the following 605-residue polypeptide: Zinc metalloproteinase-disintegrin-like BfMP (605 aa).

The first 11 residues, 1-11 (MLVVFPYQGSS), serve as a signal peptide directing secretion. Residues 12–179 (IILESGNVND…WESDEPFKNT (168 aa)) constitute a propeptide that is removed on maturation. 2 N-linked (GlcNAc...) asparagine glycosylation sites follow: Asn178 and Asn215. A Peptidase M12B domain is found at 196-392 (KYIEFYVAVD…DRPQCILNKP (197 aa)). Intrachain disulfides connect Cys307-Cys387, Cys347-Cys371, Cys350-Cys355, Cys403-Cys432, Cys414-Cys427, Cys416-Cys422, Cys426-Cys449, Cys440-Cys446, Cys445-Cys471, Cys458-Cys478, Cys465-Cys497, Cys490-Cys502, Cys509-Cys559, Cys524-Cys567, Cys537-Cys547, Cys554-Cys593, and Cys587-Cys598. Residue His332 coordinates Zn(2+). Glu333 is a catalytic residue. Residues His336 and His342 each contribute to the Zn(2+) site. Positions 400–486 (PAICGNYFVE…ECPTDIFRRN (87 aa)) constitute a Disintegrin domain. The short motif at 464-466 (DCD) is the D/ECD-tripeptide element.

This sequence belongs to the venom metalloproteinase (M12B) family. P-III subfamily. P-IIIa sub-subfamily. In terms of assembly, monomer. The cofactor is Zn(2+). Expressed by the venom gland.

The protein localises to the secreted. Snake venom zinc metalloproteinase that inhibits platelet aggregation and degrades fibrinogen. The chain is Zinc metalloproteinase-disintegrin-like BfMP from Bungarus fasciatus (Banded krait).